The chain runs to 132 residues: MTINDPIADMLTRVRNANMVRHDKLELPASNIKKEIAEILKSEGFIKNVEYVEDDKQGVIRLFLKYGQNNERVITGLKRISKPGLRVYAKANEVPKVLNGLGIALVSTSEGVVTDKEARKRNIGGEILGYIW.

The protein belongs to the universal ribosomal protein uS8 family. In terms of assembly, part of the 30S ribosomal subunit. Contacts proteins S5 and S12.

Functionally, one of the primary rRNA binding proteins, it binds directly to 16S rRNA central domain where it helps coordinate assembly of the platform of the 30S subunit. The sequence is that of Small ribosomal subunit protein uS8 from Staphylococcus saprophyticus subsp. saprophyticus (strain ATCC 15305 / DSM 20229 / NCIMB 8711 / NCTC 7292 / S-41).